The sequence spans 896 residues: UPF0182 protein GM21_2279 (896 aa).

A run of 7 helical transmembrane segments spans residues 6-26 (MTFILVAIAVIFPFIGYLLSF), 46-66 (VYAQTGAGLIFGLLLFAFLQL), 99-119 (LVRPVGILISLVLAFLAGNWG), 158-180 (LLKSFAGFMVLAASVLSAAAYYV), 201-221 (LAVLVGLFGLVVAAGFYLESF), 245-265 (TLRILTFLTPVAGVVLALGIW), and 271-291 (LALGPPVVIVALYLVGVRVYP).

Belongs to the UPF0182 family.

Its subcellular location is the cell membrane. The chain is UPF0182 protein GM21_2279 from Geobacter sp. (strain M21).